Reading from the N-terminus, the 365-residue chain is Ribosomal RNA large subunit methyltransferase F (365 aa).

Positions 1-50 are disordered; the sequence is MSKPAVKSVPSATAKTATRAANPRQKAKAPKQAKPEGKGRAKPSKDKPRA. Residues 33-50 show a composition bias toward basic and acidic residues; sequence AKPEGKGRAKPSKDKPRA.

The protein belongs to the methyltransferase superfamily. METTL16/RlmF family.

It localises to the cytoplasm. The catalysed reaction is adenosine(1618) in 23S rRNA + S-adenosyl-L-methionine = N(6)-methyladenosine(1618) in 23S rRNA + S-adenosyl-L-homocysteine + H(+). Its function is as follows. Specifically methylates the adenine in position 1618 of 23S rRNA. This is Ribosomal RNA large subunit methyltransferase F from Shewanella baltica (strain OS195).